A 29-amino-acid chain; its full sequence is Thrombin-like enzyme collinein-2 (29 aa).

Monomer. Expressed by the venom gland.

It localises to the secreted. Thrombin-like snake venom serine protease. In Crotalus durissus collilineatus (Brazilian rattlesnake), this protein is Thrombin-like enzyme collinein-2.